The sequence spans 215 residues: Ribonuclease T (215 aa).

Residues Val-20–Phe-194 form the Exonuclease domain. Residues Asp-23, Glu-25, His-181, and Asp-186 each contribute to the Mg(2+) site. His-181 functions as the Proton donor/acceptor in the catalytic mechanism.

Belongs to the RNase T family. As to quaternary structure, homodimer. The cofactor is Mg(2+).

Its function is as follows. Trims short 3' overhangs of a variety of RNA species, leaving a one or two nucleotide 3' overhang. Responsible for the end-turnover of tRNA: specifically removes the terminal AMP residue from uncharged tRNA (tRNA-C-C-A). Also appears to be involved in tRNA biosynthesis. In Yersinia pestis, this protein is Ribonuclease T.